We begin with the raw amino-acid sequence, 246 residues long: Large ribosomal subunit protein uL3 (246 aa).

Disordered stretches follow at residues 140-162 and 215-246; these read SHRS…NKKM and DVPL…EENA. Q151 carries the post-translational modification N5-methylglutamine. The segment covering 234–246 has biased composition (low complexity); the sequence is EAAPEAPASEENA.

It belongs to the universal ribosomal protein uL3 family. Part of the 50S ribosomal subunit. Forms a cluster with proteins L14 and L19. Post-translationally, methylated by PrmB.

Its function is as follows. One of the primary rRNA binding proteins, it binds directly near the 3'-end of the 23S rRNA, where it nucleates assembly of the 50S subunit. This Methylorubrum extorquens (strain PA1) (Methylobacterium extorquens) protein is Large ribosomal subunit protein uL3.